Reading from the N-terminus, the 640-residue chain is Protein ALTERED PHOSPHATE STARVATION RESPONSE 1 (640 aa).

Positions threonine 60 to serine 175 are disordered. The segment covering proline 68 to serine 87 has biased composition (pro residues). Residues proline 88–valine 103 are compositionally biased toward low complexity. The segment covering leucine 104 to serine 118 has biased composition (pro residues). The span at threonine 144–valine 173 shows a compositional bias: low complexity. Positions lysine 336–threonine 371 form a coiled coil.

In terms of tissue distribution, expressed in the root tip of primary and lateral roots, specifically in the meristematic region, including the quiescent center and lateral root cap cells.

The protein resides in the nucleus. Its function is as follows. Required for the coordination of cell differentiation and cell elongation in the root tip. Required for the coordination of cell processes necessary for correct root growth in response to phosphate starvation, through the modulation of the auxin transporter protein PIN7. The chain is Protein ALTERED PHOSPHATE STARVATION RESPONSE 1 from Arabidopsis thaliana (Mouse-ear cress).